The chain runs to 104 residues: uncharacterized protein (104 aa).

The stretch at 24-69 forms a coiled coil; that stretch reads VIKQIIEKYNDKVKELDTLKNQYQNLQQDYENLKQQVSLQRQTMIS.

This is an uncharacterized protein from Acanthamoeba polyphaga mimivirus (APMV).